The following is a 1424-amino-acid chain: Putative disease resistance protein At3g14460 (1424 aa).

The 303-residue stretch at 152–454 folds into the NB-ARC domain; that stretch reads WRQASRSRPD…AIDLLYQPRS (303 aa). Residue 200 to 207 coordinates ATP; the sequence is GMPGVGKT. 7 LRR repeats span residues 498–523, 552–571, 572–595, 597–618, 620–641, 642–665, and 806–830; these read VSGDFCFRLEDDNIPEIPSTTRHFSF, PTSLESLQLTEKVLNPLLNA, LSGLRILSLSHYQITNLPKSLKGL, LLRYLDLSSTKIKELPEFVCTL, NLQTLLLSNCRDLTSLPKSIAE, LINLRLLDLVGTPLVEMPPGIKKL, and LPSLKYLSIEKFNILQKVGLDFFFG. 2 disordered regions span residues 911-977 and 1050-1070; these read FRRS…PKDR and IKSSVPSPRSSEAIKPSQYDD. 2 stretches are compositionally biased toward polar residues: residues 912–927 and 934–972; these read RRSLTNIPESPASIPS and SSPTGNPKSDASTSAQPGFASSSQSNDDNEVTSTSSLSS. LRR repeat units follow at residues 1090–1114, 1118–1139, 1238–1262, 1264–1286, and 1310–1336; these read PQNLQSLHIDSCDGLTSLPENLTES, LHELLIIACHSLESFPGSHPPT, TPKLSSMLLSNCKKLQALPEKLFGL, SLLSLFIIKCPEIETIPGGGFPS, and LENLRNLEIDGGNEDIESFPEEGLLPK.

It belongs to the disease resistance NB-LRR family.

Its function is as follows. Potential disease resistance protein. The polypeptide is Putative disease resistance protein At3g14460 (Arabidopsis thaliana (Mouse-ear cress)).